A 256-amino-acid polypeptide reads, in one-letter code: NH(3)-dependent NAD(+) synthetase (256 aa).

29–36 serves as a coordination point for ATP; the sequence is GISGGIDS. Asp35 contacts Mg(2+). Arg115 contributes to the deamido-NAD(+) binding site. Thr135 contributes to the ATP binding site. Residue Glu140 coordinates Mg(2+). Positions 148 and 155 each coordinate deamido-NAD(+). Lys164 and Ser186 together coordinate ATP. 245–246 is a deamido-NAD(+) binding site; the sequence is HK.

This sequence belongs to the NAD synthetase family. Homodimer.

The enzyme catalyses deamido-NAD(+) + NH4(+) + ATP = AMP + diphosphate + NAD(+) + H(+). Its pathway is cofactor biosynthesis; NAD(+) biosynthesis; NAD(+) from deamido-NAD(+) (ammonia route): step 1/1. Its function is as follows. Catalyzes the ATP-dependent amidation of deamido-NAD to form NAD. Uses ammonia as a nitrogen source. This is NH(3)-dependent NAD(+) synthetase from Methanosarcina mazei (strain ATCC BAA-159 / DSM 3647 / Goe1 / Go1 / JCM 11833 / OCM 88) (Methanosarcina frisia).